A 467-amino-acid chain; its full sequence is Glutamate--tRNA ligase (467 aa).

The 'HIGH' region motif lies at 10–20; the sequence is PSPTGYLHVGG. Positions 238–242 match the 'KMSKS' region motif; sequence RLSKR. K241 lines the ATP pocket.

This sequence belongs to the class-I aminoacyl-tRNA synthetase family. Glutamate--tRNA ligase type 1 subfamily. In terms of assembly, monomer.

It localises to the cytoplasm. The enzyme catalyses tRNA(Glu) + L-glutamate + ATP = L-glutamyl-tRNA(Glu) + AMP + diphosphate. Functionally, catalyzes the attachment of glutamate to tRNA(Glu) in a two-step reaction: glutamate is first activated by ATP to form Glu-AMP and then transferred to the acceptor end of tRNA(Glu). In Citrifermentans bemidjiense (strain ATCC BAA-1014 / DSM 16622 / JCM 12645 / Bem) (Geobacter bemidjiensis), this protein is Glutamate--tRNA ligase.